We begin with the raw amino-acid sequence, 68 residues long: SERF-like protein YDL085C-A (68 aa).

Composition is skewed to basic and acidic residues over residues 1 to 43 (MARG…EILR) and 50 to 68 (DARR…KTRR). The interval 1–68 (MARGNQRDLA…EKLKAEKTRR (68 aa)) is disordered. Residue serine 37 is modified to Phosphoserine.

Belongs to the SERF family.

It localises to the cytoplasm. The protein localises to the nucleus. The sequence is that of SERF-like protein YDL085C-A from Saccharomyces cerevisiae (strain ATCC 204508 / S288c) (Baker's yeast).